A 342-amino-acid chain; its full sequence is Dihydroorotase (342 aa).

The Zn(2+) site is built by His-13 and His-15. Substrate is bound by residues 15 to 17 (HLR) and Asn-41. The Zn(2+) site is built by Lys-98, His-135, and His-173. Residue Lys-98 is modified to N6-carboxylysine. His-135 lines the substrate pocket. Leu-218 provides a ligand contact to substrate. A Zn(2+)-binding site is contributed by Asp-246. Asp-246 is an active-site residue. Substrate is bound by residues His-250 and Ala-262.

This sequence belongs to the metallo-dependent hydrolases superfamily. DHOase family. Class II DHOase subfamily. As to quaternary structure, homodimer. Requires Zn(2+) as cofactor.

It catalyses the reaction (S)-dihydroorotate + H2O = N-carbamoyl-L-aspartate + H(+). Its pathway is pyrimidine metabolism; UMP biosynthesis via de novo pathway; (S)-dihydroorotate from bicarbonate: step 3/3. Functionally, catalyzes the reversible cyclization of carbamoyl aspartate to dihydroorotate. In Aliivibrio fischeri (strain ATCC 700601 / ES114) (Vibrio fischeri), this protein is Dihydroorotase.